We begin with the raw amino-acid sequence, 379 residues long: Succinyl-diaminopimelate desuccinylase (379 aa).

His70 lines the Zn(2+) pocket. Asp72 is an active-site residue. Asp103 contacts Zn(2+). Glu137 functions as the Proton acceptor in the catalytic mechanism. 3 residues coordinate Zn(2+): Glu138, Glu166, and His352.

The protein belongs to the peptidase M20A family. DapE subfamily. Homodimer. Zn(2+) is required as a cofactor. It depends on Co(2+) as a cofactor.

The enzyme catalyses N-succinyl-(2S,6S)-2,6-diaminopimelate + H2O = (2S,6S)-2,6-diaminopimelate + succinate. The protein operates within amino-acid biosynthesis; L-lysine biosynthesis via DAP pathway; LL-2,6-diaminopimelate from (S)-tetrahydrodipicolinate (succinylase route): step 3/3. Functionally, catalyzes the hydrolysis of N-succinyl-L,L-diaminopimelic acid (SDAP), forming succinate and LL-2,6-diaminopimelate (DAP), an intermediate involved in the bacterial biosynthesis of lysine and meso-diaminopimelic acid, an essential component of bacterial cell walls. The sequence is that of Succinyl-diaminopimelate desuccinylase from Burkholderia pseudomallei (strain 1106a).